The following is a 543-amino-acid chain: Keratin, type II cytoskeletal 75 (543 aa).

Residues 1 to 16 (MSRQSTITFQTSSRRG) show a composition bias toward polar residues. The segment at 1–48 (MSRQSTITFQTSSRRGFSTASATTPATSRSRFSSASVTHSPAGSGGLG) is disordered. Positions 1–144 (MSRQSTITFQ…DPNIQRVRKE (144 aa)) are head. Low complexity predominate over residues 17 to 36 (FSTASATTPATSRSRFSSAS). Positions 145-180 (EREQIKTLNNKFASFIDKVRFLEQQNKVLETKWSLL) are coil 1A. The region spanning 145–458 (EREQIKTLNN…KLLEGEECRL (314 aa)) is the IF rod domain. Residues 181-199 (QEQGTRTVRQSLEPFFEAY) are linker 1. Residues 200–292 (ITDLRRQLDS…LFEAELCQMQ (93 aa)) form a coil 1B region. Positions 293–315 (TRVSDTSVVLSMDNNRSLDLDSI) are linker 12. Positions 316 to 454 (IAEVKAQYEE…ATYRKLLEGE (139 aa)) are coil 2. The interval 455–543 (ECRLSGEGVS…TSSSRKSYKH (89 aa)) is tail. The segment at 511–543 (SSFSNSSSRGLGGSGSSFKFVSTTSSSRKSYKH) is disordered. Low complexity predominate over residues 526 to 543 (SSFKFVSTTSSSRKSYKH).

It belongs to the intermediate filament family. As to quaternary structure, heterodimer of a type I and a type II keratin. May associate with KRT17.

In terms of biological role, plays a central role in hair and nail formation. Essential component of keratin intermediate filaments in the companion layer of the hair follicle. The sequence is that of Keratin, type II cytoskeletal 75 (KRT75) from Bos taurus (Bovine).